A 203-amino-acid chain; its full sequence is tRNA (guanine-N(7)-)-methyltransferase (203 aa).

Residues Glu34, Glu59, Asp86, and Asp107 each coordinate S-adenosyl-L-methionine. Asp107 is an active-site residue. Substrate-binding positions include Lys111, Asp143, and 181–184 (TSYE).

The protein belongs to the class I-like SAM-binding methyltransferase superfamily. TrmB family.

It carries out the reaction guanosine(46) in tRNA + S-adenosyl-L-methionine = N(7)-methylguanosine(46) in tRNA + S-adenosyl-L-homocysteine. It functions in the pathway tRNA modification; N(7)-methylguanine-tRNA biosynthesis. Catalyzes the formation of N(7)-methylguanine at position 46 (m7G46) in tRNA. The protein is tRNA (guanine-N(7)-)-methyltransferase of Mycoplasmopsis pulmonis (strain UAB CTIP) (Mycoplasma pulmonis).